Reading from the N-terminus, the 297-residue chain is GTP cyclohydrolase FolE2 (297 aa).

2 disordered regions span residues 1–21 and 180–207; these read MTHASALGLTQHIPDTQSERD and IRAELMEPPGDRRRPPPPGGGESTRERP.

This sequence belongs to the GTP cyclohydrolase IV family.

The enzyme catalyses GTP + H2O = 7,8-dihydroneopterin 3'-triphosphate + formate + H(+). Its pathway is cofactor biosynthesis; 7,8-dihydroneopterin triphosphate biosynthesis; 7,8-dihydroneopterin triphosphate from GTP: step 1/1. Functionally, converts GTP to 7,8-dihydroneopterin triphosphate. The chain is GTP cyclohydrolase FolE2 from Methylibium petroleiphilum (strain ATCC BAA-1232 / LMG 22953 / PM1).